The primary structure comprises 444 residues: tRNA pseudouridine synthase Pus10 (444 aa).

Asp265 (nucleophile) is an active-site residue. Residues Tyr333 and Tyr405 each coordinate substrate.

Belongs to the pseudouridine synthase Pus10 family.

It catalyses the reaction uridine(54) in tRNA = pseudouridine(54) in tRNA. The enzyme catalyses uridine(55) in tRNA = pseudouridine(55) in tRNA. In terms of biological role, responsible for synthesis of pseudouridine from uracil-54 and uracil-55 in the psi GC loop of transfer RNAs. The polypeptide is tRNA pseudouridine synthase Pus10 (Thermofilum pendens (strain DSM 2475 / Hrk 5)).